Here is a 237-residue protein sequence, read N- to C-terminus: NAD-dependent protein deacylase (237 aa).

A Deacetylase sirtuin-type domain is found at methionine 1–leucine 235. Residue glycine 8 to tryptophan 28 participates in NAD(+) binding. Residues tyrosine 53 and arginine 56 each contribute to the substrate site. Residue glutamine 86–aspartate 89 participates in NAD(+) binding. Catalysis depends on histidine 104, which acts as the Proton acceptor. Zn(2+)-binding residues include cysteine 112, cysteine 115, cysteine 138, and cysteine 140. Residues glycine 177 to serine 179, asparagine 203 to glutamate 205, and alanine 221 contribute to the NAD(+) site.

The protein belongs to the sirtuin family. Class III subfamily. Zn(2+) serves as cofactor.

The protein resides in the cytoplasm. It catalyses the reaction N(6)-acetyl-L-lysyl-[protein] + NAD(+) + H2O = 2''-O-acetyl-ADP-D-ribose + nicotinamide + L-lysyl-[protein]. The enzyme catalyses N(6)-succinyl-L-lysyl-[protein] + NAD(+) + H2O = 2''-O-succinyl-ADP-D-ribose + nicotinamide + L-lysyl-[protein]. Functionally, NAD-dependent lysine deacetylase and desuccinylase that specifically removes acetyl and succinyl groups on target proteins. Modulates the activities of several proteins which are inactive in their acylated form. The sequence is that of NAD-dependent protein deacylase from Mycobacterium leprae (strain TN).